The following is a 464-amino-acid chain: Argininosuccinate lyase (464 aa).

This sequence belongs to the lyase 1 family. Argininosuccinate lyase subfamily.

It localises to the cytoplasm. It carries out the reaction 2-(N(omega)-L-arginino)succinate = fumarate + L-arginine. The protein operates within amino-acid biosynthesis; L-arginine biosynthesis; L-arginine from L-ornithine and carbamoyl phosphate: step 3/3. The sequence is that of Argininosuccinate lyase from Streptococcus suis (strain 98HAH33).